Consider the following 380-residue polypeptide: XK-related protein 9 (380 aa).

A run of 8 helical transmembrane segments spans residues 10–30 (LLSAAGLVMYVADVCTDAALV), 39–59 (VVCAALTLLFIVVGLLVTQVF), 81–101 (LPVVSKRGLATLHLFGVGIFI), 167–187 (CSLVQLVGMSFSFMNAAWALV), 228–248 (ALLLIFSIYSTVGLAIVWLLG), 264–284 (SLEFLYRAIVGVILTFTFFNV), 294–314 (ITYYFLHSLINVLSLLLLFVL), and 329–349 (TLMAACSVLGLVCLVLYYLLL).

Belongs to the XK family.

The protein resides in the cell membrane. The catalysed reaction is a 1,2-diacyl-sn-glycero-3-phospho-L-serine(in) = a 1,2-diacyl-sn-glycero-3-phospho-L-serine(out). In terms of biological role, phospholipid scramblase that promotes phosphatidylserine exposure on apoptotic cell surface. Phosphatidylserine is a specific marker only present at the surface of apoptotic cells and acts as a specific signal for engulfment. The polypeptide is XK-related protein 9 (Tetraodon nigroviridis (Spotted green pufferfish)).